A 442-amino-acid chain; its full sequence is 4-hydroxyphenylpyruvate dioxygenase (442 aa).

VOC domains lie at 45–200 (RFHH…GFEA) and 216–376 (RLDH…IFTK). Fe cation is bound by residues histidine 219, histidine 301, and glutamate 387.

Belongs to the 4HPPD family. It depends on Fe cation as a cofactor.

It localises to the cytoplasm. It carries out the reaction 3-(4-hydroxyphenyl)pyruvate + O2 = homogentisate + CO2. It functions in the pathway amino-acid degradation; L-phenylalanine degradation; acetoacetate and fumarate from L-phenylalanine: step 3/6. The protein operates within cofactor biosynthesis; prenylquinone biosynthesis. This chain is 4-hydroxyphenylpyruvate dioxygenase, found in Daucus carota (Wild carrot).